Consider the following 204-residue polypeptide: Holliday junction branch migration complex subunit RuvA (204 aa).

The tract at residues 1–64 (MIGKLKGTIE…EDQIRLFGFM (64 aa)) is domain I. A domain II region spans residues 65 to 143 (AVLEREWFNL…AFAGEATNIG (79 aa)). A flexible linker region spans residues 144 to 151 (FKQELGEG). The segment at 152-204 (VAPAPVSDAVSALTNLGYSRDQAANAIAAAMKVAGDEADSAKLIRLGLKELSR) is domain III.

Belongs to the RuvA family. Homotetramer. Forms an RuvA(8)-RuvB(12)-Holliday junction (HJ) complex. HJ DNA is sandwiched between 2 RuvA tetramers; dsDNA enters through RuvA and exits via RuvB. An RuvB hexamer assembles on each DNA strand where it exits the tetramer. Each RuvB hexamer is contacted by two RuvA subunits (via domain III) on 2 adjacent RuvB subunits; this complex drives branch migration. In the full resolvosome a probable DNA-RuvA(4)-RuvB(12)-RuvC(2) complex forms which resolves the HJ.

It is found in the cytoplasm. Functionally, the RuvA-RuvB-RuvC complex processes Holliday junction (HJ) DNA during genetic recombination and DNA repair, while the RuvA-RuvB complex plays an important role in the rescue of blocked DNA replication forks via replication fork reversal (RFR). RuvA specifically binds to HJ cruciform DNA, conferring on it an open structure. The RuvB hexamer acts as an ATP-dependent pump, pulling dsDNA into and through the RuvAB complex. HJ branch migration allows RuvC to scan DNA until it finds its consensus sequence, where it cleaves and resolves the cruciform DNA. The sequence is that of Holliday junction branch migration complex subunit RuvA from Rhizobium rhizogenes (strain K84 / ATCC BAA-868) (Agrobacterium radiobacter).